Here is a 289-residue protein sequence, read N- to C-terminus: MTIFTKNSVPLRARVETMSAFSLPSVNPSRADSEVILHAKVEAFYYDRFLALRNVYLPIYKNLITTLIGPSGCGKSTLLRCFNRLNDLIPQTRLQGQIIFKGRNIYHPLEDAVVLRRNIGMVFQKPNPFPKSIYNNVAFGLRIQGYRGDIDEIVEHSLRQAILWDEVKNKLKENALSLSGGQQQRLCIARMLAVQPEIILMDEPCSALDPTSTKQIEALIKEIKQQHTIVIVTHNMQQASRISDMTAFFNTEMIEGSRTGELVEYDHTPVIFQNPTREITRQYVNGYFG.

The ABC transporter domain maps to 37–276 (LHAKVEAFYY…HTPVIFQNPT (240 aa)). 69 to 76 (GPSGCGKS) contributes to the ATP binding site.

Belongs to the ABC transporter superfamily. Phosphate importer (TC 3.A.1.7) family. In terms of assembly, the complex is composed of two ATP-binding proteins (PstB), two transmembrane proteins (PstC and PstA) and a solute-binding protein (PstS).

The protein resides in the cell inner membrane. The catalysed reaction is phosphate(out) + ATP + H2O = ADP + 2 phosphate(in) + H(+). Part of the ABC transporter complex PstSACB involved in phosphate import. Responsible for energy coupling to the transport system. The polypeptide is Phosphate import ATP-binding protein PstB 2 (Trichormus variabilis (strain ATCC 29413 / PCC 7937) (Anabaena variabilis)).